The chain runs to 508 residues: Pancreatic alpha-amylase (508 aa).

An N-terminal signal peptide occupies residues 1-15 (MKFVLLLSLIGFCWA). A Pyrrolidone carboxylic acid modification is found at Gln16. 3 disulfides stabilise this stretch: Cys43/Cys101, Cys85/Cys130, and Cys156/Cys172. Ca(2+) is bound by residues Asn115, Arg170, and Asp179. Arg207 provides a ligand contact to chloride. The Nucleophile role is filled by Asp209. His213 is a binding site for Ca(2+). The active-site Proton donor is the Glu245. Chloride is bound by residues Asn310 and Arg349. Cystine bridges form between Cys390/Cys396 and Cys462/Cys474.

The protein belongs to the glycosyl hydrolase 13 family. As to quaternary structure, monomer. Ca(2+) serves as cofactor. Chloride is required as a cofactor.

The protein localises to the secreted. It localises to the extracellular space. It catalyses the reaction Endohydrolysis of (1-&gt;4)-alpha-D-glucosidic linkages in polysaccharides containing three or more (1-&gt;4)-alpha-linked D-glucose units.. The chain is Pancreatic alpha-amylase (Amy2) from Rattus norvegicus (Rat).